Consider the following 401-residue polypeptide: Phosphoglycerate kinase (401 aa).

Residues 24-26 (DFN), Arg-40, 63-66 (HFGR), Arg-122, and Arg-155 contribute to the substrate site. ATP contacts are provided by residues Lys-206, Gly-297, Glu-328, and 357–360 (GGDS).

The protein belongs to the phosphoglycerate kinase family. In terms of assembly, monomer.

The protein localises to the cytoplasm. The enzyme catalyses (2R)-3-phosphoglycerate + ATP = (2R)-3-phospho-glyceroyl phosphate + ADP. The protein operates within carbohydrate degradation; glycolysis; pyruvate from D-glyceraldehyde 3-phosphate: step 2/5. The polypeptide is Phosphoglycerate kinase (Prochlorococcus marinus (strain NATL2A)).